Reading from the N-terminus, the 342-residue chain is Nucleoid-associated protein Shewana3_2426 (342 aa).

The protein belongs to the YejK family.

The protein resides in the cytoplasm. It localises to the nucleoid. This chain is Nucleoid-associated protein Shewana3_2426, found in Shewanella sp. (strain ANA-3).